The following is a 123-amino-acid chain: Fluoride-specific ion channel FluC (123 aa).

4 helical membrane passes run 5 to 25 (VWVA…YKFV), 33 to 53 (LATF…IGAF), 62 to 82 (LKLA…TFAA), and 94 to 114 (ITAF…VALG). Residues Gly-72 and Ser-75 each coordinate Na(+).

It belongs to the fluoride channel Fluc/FEX (TC 1.A.43) family.

The protein resides in the cell inner membrane. It carries out the reaction fluoride(in) = fluoride(out). Na(+) is not transported, but it plays an essential structural role and its presence is essential for fluoride channel function. In terms of biological role, fluoride-specific ion channel. Important for reducing fluoride concentration in the cell, thus reducing its toxicity. The polypeptide is Fluoride-specific ion channel FluC (Ignicoccus hospitalis (strain KIN4/I / DSM 18386 / JCM 14125)).